The following is a 458-amino-acid chain: Adenylosuccinate synthetase (458 aa).

GTP is bound by residues 17 to 23 (GDEGKGK) and 45 to 47 (GHT). Aspartate 18 (proton acceptor) is an active-site residue. Residues aspartate 18 and glycine 45 each contribute to the Mg(2+) site. IMP-binding positions include 18–21 (DEGK), 43–46 (NAGH), threonine 137, arginine 151, glutamine 247, threonine 262, and arginine 330. The active-site Proton donor is histidine 46. 326 to 332 (VTTGRSR) provides a ligand contact to substrate. Residues arginine 332, 358 to 360 (KLD), and 440 to 442 (STS) each bind GTP.

This sequence belongs to the adenylosuccinate synthetase family. As to quaternary structure, homodimer. Mg(2+) is required as a cofactor.

It is found in the cytoplasm. It catalyses the reaction IMP + L-aspartate + GTP = N(6)-(1,2-dicarboxyethyl)-AMP + GDP + phosphate + 2 H(+). The protein operates within purine metabolism; AMP biosynthesis via de novo pathway; AMP from IMP: step 1/2. Functionally, plays an important role in the de novo pathway of purine nucleotide biosynthesis. Catalyzes the first committed step in the biosynthesis of AMP from IMP. In Verminephrobacter eiseniae (strain EF01-2), this protein is Adenylosuccinate synthetase.